Reading from the N-terminus, the 65-residue chain is Protein YSY6 (65 aa).

Residues L45–L65 traverse the membrane as a helical segment.

This sequence belongs to the RAMP4 family.

It is found in the membrane. It localises to the endoplasmic reticulum membrane. In terms of biological role, interacts with target proteins during their translocation into the lumen of the endoplasmic reticulum. Protects unfolded target proteins against degradation during ER stress. May facilitate glycosylation of target proteins after termination of ER stress. This chain is Protein YSY6 (YSY6), found in Saccharomyces cerevisiae (strain ATCC 204508 / S288c) (Baker's yeast).